We begin with the raw amino-acid sequence, 993 residues long: Testis-expressed protein 13C (993 aa).

3 disordered regions span residues 281-381, 520-547, and 894-959; these read QEET…SLKK, DSKS…SHSL, and FSKS…PVNW. Polar residues predominate over residues 325 to 335; that stretch reads GMTSQGDSSSH. Residues 353-364 are compositionally biased toward basic and acidic residues; sequence SRSHSLEKKPVM. The span at 944-957 shows a compositional bias: polar residues; it reads ESQQQKPASCSSPV. The segment at 955–984 adopts a RanBP2-type zinc-finger fold; it reads SPVNWACPWCNAMNFPRNKVCSKCKRVRMP.

Belongs to the TEX13 family.

In Homo sapiens (Human), this protein is Testis-expressed protein 13C.